The following is a 550-amino-acid chain: Transcription factor 7-like 1-D (550 aa).

Positions 1-61 (MPQLNSGXGD…SENHSSDSDS (61 aa)) are interaction with CTNNB1-A. 4 disordered regions span residues 1 to 77 (MPQL…EKPR), 182 to 212 (GTPP…PYYP), 390 to 473 (WSAR…SLTT), and 488 to 514 (ASKS…SRPI). Basic and acidic residues-rich tracts occupy residues 17 to 32 (ELIR…EKSP) and 52 to 77 (SENH…EKPR). The interaction with AES and TLE4-A stretch occupies residues 109 to 311 (LGGITCPMVP…SPNLSMKSNV (203 aa)). Residues 323-391 (IKKPLNAFML…LHSQLYPSWS (69 aa)) constitute a DNA-binding region (HMG box). Residues 406 to 415 (KQSPEMENYT) show a composition bias toward basic and acidic residues. The segment at 407–550 (QSPEMENYTK…PLPLVARSSD (144 aa)) is interaction with CTBP-B. Over residues 444-455 (SPATPSAALASP) the composition is skewed to low complexity.

The protein belongs to the TCF/LEF family. Interacts with csnk1e, ctnnb1-A, ctbp-B, dact1-A and gsk3b. May interact with ase and tle4-A. Post-translationally, phosphorylated. Phosphorylation by csnk1e promotes binding to ctnnb1-A while phosphorylation by gsk3b may reverse this effect.

It localises to the nucleus. Participates in the Wnt signaling pathway. Binds to DNA and acts as a repressor in the absence of ctnnb1-A and possibly ctnnb1-B, and as an activator in the presence of these proteins. Required early in development for the establishment of the dorsal body axis in response to maternal Wnt signaling. This chain is Transcription factor 7-like 1-D (tcf7l1-d), found in Xenopus laevis (African clawed frog).